Reading from the N-terminus, the 401-residue chain is Dual-specificity RNA methyltransferase RlmN (401 aa).

Catalysis depends on Glu114, which acts as the Proton acceptor. The Radical SAM core domain occupies 120 to 365; it reads DKTRGTLCVS…TMVRRTRGDD (246 aa). A disulfide bridge links Cys127 with Cys370. The [4Fe-4S] cluster site is built by Cys134, Cys138, and Cys141. S-adenosyl-L-methionine is bound by residues 187–188, Ser219, 241–243, and Asn327; these read GE and SLH. Cys370 acts as the S-methylcysteine intermediate in catalysis.

Belongs to the radical SAM superfamily. RlmN family. Requires [4Fe-4S] cluster as cofactor.

It is found in the cytoplasm. It carries out the reaction adenosine(2503) in 23S rRNA + 2 reduced [2Fe-2S]-[ferredoxin] + 2 S-adenosyl-L-methionine = 2-methyladenosine(2503) in 23S rRNA + 5'-deoxyadenosine + L-methionine + 2 oxidized [2Fe-2S]-[ferredoxin] + S-adenosyl-L-homocysteine. The catalysed reaction is adenosine(37) in tRNA + 2 reduced [2Fe-2S]-[ferredoxin] + 2 S-adenosyl-L-methionine = 2-methyladenosine(37) in tRNA + 5'-deoxyadenosine + L-methionine + 2 oxidized [2Fe-2S]-[ferredoxin] + S-adenosyl-L-homocysteine. In terms of biological role, specifically methylates position 2 of adenine 2503 in 23S rRNA and position 2 of adenine 37 in tRNAs. m2A2503 modification seems to play a crucial role in the proofreading step occurring at the peptidyl transferase center and thus would serve to optimize ribosomal fidelity. In Stenotrophomonas maltophilia (strain R551-3), this protein is Dual-specificity RNA methyltransferase RlmN.